The chain runs to 209 residues: Uracil phosphoribosyltransferase (209 aa).

Residues arginine 79, arginine 104, and 131–139 (DPMLATGGS) each bind 5-phospho-alpha-D-ribose 1-diphosphate. Uracil-binding positions include isoleucine 194 and 199 to 201 (GDA). Aspartate 200 is a 5-phospho-alpha-D-ribose 1-diphosphate binding site.

This sequence belongs to the UPRTase family. It depends on Mg(2+) as a cofactor.

It carries out the reaction UMP + diphosphate = 5-phospho-alpha-D-ribose 1-diphosphate + uracil. Its pathway is pyrimidine metabolism; UMP biosynthesis via salvage pathway; UMP from uracil: step 1/1. With respect to regulation, allosterically activated by GTP. Functionally, catalyzes the conversion of uracil and 5-phospho-alpha-D-ribose 1-diphosphate (PRPP) to UMP and diphosphate. The sequence is that of Uracil phosphoribosyltransferase from Alkaliphilus metalliredigens (strain QYMF).